Consider the following 167-residue polypeptide: Phospholipase A2 heteromtoxin (167 aa).

Ca(2+) is bound by residues Trp38, Gly40, and Gly42. Cystine bridges form between Cys39-Cys61, Cys60-Cys99, Cys67-Cys92, Cys90-Cys127, and Cys132-Cys144. The active site involves His64. Asp65 is a binding site for Ca(2+). Positions 136 to 140 (GRSAR) are excised as a propeptide.

The protein belongs to the phospholipase A2 family. Group III subfamily. As to quaternary structure, heterodimer composed of a large and a small subunits; disulfide-linked. It depends on Ca(2+) as a cofactor. Expressed by the venom gland.

The protein resides in the secreted. It catalyses the reaction a 1,2-diacyl-sn-glycero-3-phosphocholine + H2O = a 1-acyl-sn-glycero-3-phosphocholine + a fatty acid + H(+). Functionally, phospholipase toxin, which catalyzes the calcium-dependent hydrolysis of the 2-acyl groups in 3-sn-phosphoglycerides. Inhibits both skeletal (RYR1) and cardiac (RYR2) ryanodine receptors (calcium release channels). Probably blocks ryanodine receptors by generating a lipid product. In Heterometrus laoticus (Thai giant scorpion), this protein is Phospholipase A2 heteromtoxin.